The following is a 115-amino-acid chain: UPF0295 protein BPUM_0828 (115 aa).

Transmembrane regions (helical) follow at residues 13–33 and 41–61; these read TFAL…VFFK and FFML…FWIG.

It belongs to the UPF0295 family.

It is found in the cell membrane. This is UPF0295 protein BPUM_0828 from Bacillus pumilus (strain SAFR-032).